A 230-amino-acid polypeptide reads, in one-letter code: Large ribosomal subunit protein uL1 (230 aa).

It belongs to the universal ribosomal protein uL1 family. As to quaternary structure, part of the 50S ribosomal subunit.

In terms of biological role, binds directly to 23S rRNA. The L1 stalk is quite mobile in the ribosome, and is involved in E site tRNA release. Protein L1 is also a translational repressor protein, it controls the translation of the L11 operon by binding to its mRNA. The sequence is that of Large ribosomal subunit protein uL1 from Rubrobacter xylanophilus (strain DSM 9941 / JCM 11954 / NBRC 16129 / PRD-1).